A 543-amino-acid polypeptide reads, in one-letter code: Dipeptide-binding protein DppE (543 aa).

Residues 1-22 form the signal peptide; the sequence is MKRVKKLWGMGLALGLSFALMG. Cys-23 carries the N-palmitoyl cysteine lipid modification. Residue Cys-23 is the site of S-diacylglycerol cysteine attachment.

This sequence belongs to the bacterial solute-binding protein 5 family.

The protein resides in the cell membrane. Probably part of the ABC transporter DppBCDE involved in dipeptide transport. The polypeptide is Dipeptide-binding protein DppE (dppE) (Bacillus subtilis (strain 168)).